Here is a 435-residue protein sequence, read N- to C-terminus: Tol-Pal system protein TolB (435 aa).

The N-terminal stretch at 1–26 (MKIFSPIRLVLAIAALMSVFSAPAFA) is a signal peptide.

It belongs to the TolB family. In terms of assembly, the Tol-Pal system is composed of five core proteins: the inner membrane proteins TolA, TolQ and TolR, the periplasmic protein TolB and the outer membrane protein Pal. They form a network linking the inner and outer membranes and the peptidoglycan layer.

It localises to the periplasm. Its function is as follows. Part of the Tol-Pal system, which plays a role in outer membrane invagination during cell division and is important for maintaining outer membrane integrity. This chain is Tol-Pal system protein TolB, found in Agrobacterium fabrum (strain C58 / ATCC 33970) (Agrobacterium tumefaciens (strain C58)).